The sequence spans 497 residues: MASGILLNVKEEVTCPICLELLTEPLSLHCGHSFCQACITANHKKSMLYKEGERSCPVCRISYQPENIQPNRHVANIVEKLREVKLSPEEGQKVDHCARHGEKLLLFCQEDSKVICWLCERSQEHRGHHTFLMEEVAQEYHVKLQTALEMLRQKQQEAEKLEADIREEKASWKIQIDYDKTNVSADFEQLREILDWEESNELQNLEKEEEDILKSLTKSETEMVQQTQYMRELISELEHRLQGSMMDLLQGVDGIIKRIENMTLKKPKTFHKNQRRVFRAPDLKGMLDMFRELTDARRYWVDVTLAPNNISHAVIAEDKRQVSSRNPQIMYQAPGTLFTFPSLTNFNYCTGVLGSQSITSGKHYWEVDVSKKSAWILGVCAGFQSDAMYNIEQNENYQPKYGYWVIGLQEGVKYSVFQDGSSHTPFAPFIVPLSVIICPDRVGVFVDYEACTVSFFNITNHGFLIYKFSQCSFSKPVFPYLNPRKCTVPMTLCSPSS.

A2 is modified (N-acetylalanine). Residues 15–60 (CPICLELLTEPLSLHCGHSFCQACITANHKKSMLYKEGERSCPVCR) form an RING-type zinc finger. Position 87 is a phosphoserine (S87). A B box-type zinc finger spans residues 92–133 (QKVDHCARHGEKLLLFCQEDSKVICWLCERSQEHRGHHTFLM). C97, H100, C119, and H125 together coordinate Zn(2+). The stretch at 137-225 (AQEYHVKLQT…LTKSETEMVQ (89 aa)) forms a coiled coil. The segment at 187–200 (FEQLREILDWEESN) is required for interaction with GABARAP and for autophagy. The B30.2/SPRY domain occupies 283–497 (LKGMLDMFRE…VPMTLCSPSS (215 aa)).

The protein belongs to the TRIM/RBCC family. As to quaternary structure, can form homodimers and homotrimers. In addition to lower-order dimerization, also exhibits a higher-order multimerization and both low- and high-order multimerizations are essential for its restriction activity. Interacts with MAP3K7/TAK1, TAB2 and TAB3. Interacts with HSPA8/HSC70, PSMC2, PSMC4, PSMC5 and PSMD7. Interacts with SQSTM1. Interacts (via B30.2/SPRY domain) with HSPA1A/B. Interacts with TRIM6 and TRIM34. Interacts with BECN1; GABARAP. Interacts with ULK1 (phosphorylated form), GABARAPL1, GABARAPL2, MAP1LC3A and MAP1LC3C. Post-translationally, degraded in a proteasome-independent fashion in the absence of viral infection but in a proteasome-dependent fashion following exposure to restriction sensitive virus. Autoubiquitinated in a RING finger- and UBE2D2-dependent manner. Monoubiquitinated by TRIM21. Deubiquitinated by Yersinia YopJ. Ubiquitination may not lead to proteasomal degradation.

It localises to the cytoplasm. The protein resides in the nucleus. The catalysed reaction is S-ubiquitinyl-[E2 ubiquitin-conjugating enzyme]-L-cysteine + [acceptor protein]-L-lysine = [E2 ubiquitin-conjugating enzyme]-L-cysteine + N(6)-ubiquitinyl-[acceptor protein]-L-lysine.. Its pathway is protein modification; protein ubiquitination. Its function is as follows. Capsid-specific restriction factor that prevents infection from non-host-adapted retroviruses. Blocks viral replication early in the life cycle, after viral entry but before reverse transcription. In addition to acting as a capsid-specific restriction factor, also acts as a pattern recognition receptor that activates innate immune signaling in response to the retroviral capsid lattice. Binding to the viral capsid triggers its E3 ubiquitin ligase activity, and in concert with the heterodimeric ubiquitin conjugating enzyme complex UBE2V1-UBE2N (also known as UBC13-UEV1A complex) generates 'Lys-63'-linked polyubiquitin chains, which in turn are catalysts in the autophosphorylation of the MAP3K7/TAK1 complex (includes TAK1, TAB2, and TAB3). Activation of the MAP3K7/TAK1 complex by autophosphorylation results in the induction and expression of NF-kappa-B and MAPK-responsive inflammatory genes, thereby leading to an innate immune response in the infected cell. Restricts infection by human immunodeficiency virus type 1 (HIV-1) and simian immunodeficiency virus (SIV-agm). Plays a role in regulating autophagy through activation of autophagy regulator BECN1 by causing its dissociation from its inhibitors BCL2 and TAB2. Also plays a role in autophagy by acting as a selective autophagy receptor which recognizes and targets HIV-1 capsid protein p24 for autophagic destruction. This Macaca mulatta (Rhesus macaque) protein is Tripartite motif-containing protein 5 (TRIM5).